The chain runs to 559 residues: Small ribosomal subunit protein uS3m (559 aa).

The segment at 113-134 (EGTEEERNEVRGRGAGKRVESI) is disordered. Residues 120–134 (NEVRGRGAGKRVESI) are compositionally biased toward basic and acidic residues.

Belongs to the universal ribosomal protein uS3 family.

It is found in the mitochondrion. This Zea mays (Maize) protein is Small ribosomal subunit protein uS3m (RPS3).